The following is a 197-amino-acid chain: MNNTVLVTCGATVSFPRLVETVLDRSVTEKLKVLGYGRIVIQYGRGFSDTFLQLVEKHLGLFTEKKSCGIKVLDKIENLKVISVDGIEICGFEFSHDIEKLIANNIDLVISHAGTGSILDSLRVGKKLIVVVNDTLMDNHQQLIADKFEQQKLLWSVHANTEELLRALDRSENEELLKIDNTYNKQFEKLLYNVAID.

The protein belongs to the glycosyltransferase 28 family. In terms of assembly, heterodimer with ALG14 to form a functional enzyme.

It is found in the endoplasmic reticulum. It carries out the reaction an N-acetyl-alpha-D-glucosaminyl-diphospho-di-trans,poly-cis-dolichol + UDP-N-acetyl-alpha-D-glucosamine = an N,N'-diacetylchitobiosyl-diphospho-di-trans,poly-cis-dolichol + UDP + H(+). Its function is as follows. Involved in protein N-glycosylation. Essential for the second step of the dolichol-linked oligosaccharide pathway. The sequence is that of UDP-N-acetylglucosamine transferase subunit ALG13 (ALG13) from Kluyveromyces lactis (strain ATCC 8585 / CBS 2359 / DSM 70799 / NBRC 1267 / NRRL Y-1140 / WM37) (Yeast).